Here is a 368-residue protein sequence, read N- to C-terminus: Ferredoxin--NADP reductase (368 aa).

The FAD site is built by D56, Q64, Y69, V109, F144, D310, and T351.

It belongs to the ferredoxin--NADP reductase type 2 family. As to quaternary structure, homodimer. FAD is required as a cofactor.

It carries out the reaction 2 reduced [2Fe-2S]-[ferredoxin] + NADP(+) + H(+) = 2 oxidized [2Fe-2S]-[ferredoxin] + NADPH. This is Ferredoxin--NADP reductase from Leptothrix cholodnii (strain ATCC 51168 / LMG 8142 / SP-6) (Leptothrix discophora (strain SP-6)).